We begin with the raw amino-acid sequence, 392 residues long: Succinate--CoA ligase [ADP-forming] subunit beta (392 aa).

The 228-residue stretch at R9–A236 folds into the ATP-grasp domain. ATP-binding positions include K45, G52 to G54, A94, and E99. Mg(2+)-binding residues include N191 and D205. Residues N256 and G318–T320 each bind substrate.

The protein belongs to the succinate/malate CoA ligase beta subunit family. In terms of assembly, heterotetramer of two alpha and two beta subunits. The cofactor is Mg(2+).

The catalysed reaction is succinate + ATP + CoA = succinyl-CoA + ADP + phosphate. It catalyses the reaction GTP + succinate + CoA = succinyl-CoA + GDP + phosphate. The protein operates within carbohydrate metabolism; tricarboxylic acid cycle; succinate from succinyl-CoA (ligase route): step 1/1. Its function is as follows. Succinyl-CoA synthetase functions in the citric acid cycle (TCA), coupling the hydrolysis of succinyl-CoA to the synthesis of either ATP or GTP and thus represents the only step of substrate-level phosphorylation in the TCA. The beta subunit provides nucleotide specificity of the enzyme and binds the substrate succinate, while the binding sites for coenzyme A and phosphate are found in the alpha subunit. The chain is Succinate--CoA ligase [ADP-forming] subunit beta from Salinispora arenicola (strain CNS-205).